The following is a 598-amino-acid chain: Transcription factor himD (598 aa).

A DNA-binding region (zn(2)-C6 fungal-type) is located at residues 18 to 47 (CQNCARAKIRCIRSVPTGSCDRCERLRKTC). The tract at residues 87–110 (TVSEASIDDKSPTTTPTTPRPPPD) is disordered.

The protein localises to the nucleus. Its function is as follows. Transcription factor that, with himB, probably co-regulates the him gene cluster that mediates the biosynthesis of himeic acid A, a ubiquitin-activating enzyme (E1) inhibitor. The polypeptide is Transcription factor himD (Aspergillus japonicus).